Reading from the N-terminus, the 378-residue chain is Succinyl-diaminopimelate desuccinylase (378 aa).

Residue H67 participates in Zn(2+) binding. The active site involves D69. D100 is a binding site for Zn(2+). Residue E134 is the Proton acceptor of the active site. 3 residues coordinate Zn(2+): E135, E163, and H349.

It belongs to the peptidase M20A family. DapE subfamily. As to quaternary structure, homodimer. The cofactor is Zn(2+). It depends on Co(2+) as a cofactor.

It catalyses the reaction N-succinyl-(2S,6S)-2,6-diaminopimelate + H2O = (2S,6S)-2,6-diaminopimelate + succinate. The protein operates within amino-acid biosynthesis; L-lysine biosynthesis via DAP pathway; LL-2,6-diaminopimelate from (S)-tetrahydrodipicolinate (succinylase route): step 3/3. Its function is as follows. Catalyzes the hydrolysis of N-succinyl-L,L-diaminopimelic acid (SDAP), forming succinate and LL-2,6-diaminopimelate (DAP), an intermediate involved in the bacterial biosynthesis of lysine and meso-diaminopimelic acid, an essential component of bacterial cell walls. The polypeptide is Succinyl-diaminopimelate desuccinylase (Nitrosospira multiformis (strain ATCC 25196 / NCIMB 11849 / C 71)).